The chain runs to 334 residues: N-acetyl-gamma-glutamyl-phosphate reductase (334 aa).

Residue Cys149 is part of the active site.

It belongs to the NAGSA dehydrogenase family. Type 1 subfamily.

It is found in the cytoplasm. It catalyses the reaction N-acetyl-L-glutamate 5-semialdehyde + phosphate + NADP(+) = N-acetyl-L-glutamyl 5-phosphate + NADPH + H(+). The protein operates within amino-acid biosynthesis; L-arginine biosynthesis; N(2)-acetyl-L-ornithine from L-glutamate: step 3/4. Catalyzes the NADPH-dependent reduction of N-acetyl-5-glutamyl phosphate to yield N-acetyl-L-glutamate 5-semialdehyde. This Sulfurimonas denitrificans (strain ATCC 33889 / DSM 1251) (Thiomicrospira denitrificans (strain ATCC 33889 / DSM 1251)) protein is N-acetyl-gamma-glutamyl-phosphate reductase.